The primary structure comprises 179 residues: Protein AC4 (179 aa).

Belongs to the geminiviridae protein AC4/C4 family.

Functionally, pathogenicity determinant. May act as a suppressor of RNA-mediated gene silencing, also known as post-transcriptional gene silencing (PTGS), a mechanism of plant viral defense that limits the accumulation of viral RNAs. In African cassava mosaic virus (isolate Nigerian) (ACMV), this protein is Protein AC4.